Consider the following 160-residue polypeptide: Cytochrome b6-f complex subunit 4 (160 aa).

A run of 3 helical transmembrane segments spans residues 36 to 56, 95 to 115, and 131 to 151; these read LLYIFPVVILGTIACNVGLAV, LLGVFLMVSVPAGLLTVPFLE, and TVFLIGTAVALWLGIGATLPI.

This sequence belongs to the cytochrome b family. PetD subfamily. As to quaternary structure, the 4 large subunits of the cytochrome b6-f complex are cytochrome b6, subunit IV (17 kDa polypeptide, petD), cytochrome f and the Rieske protein, while the 4 small subunits are petG, petL, petM and petN. The complex functions as a dimer.

Its subcellular location is the plastid. The protein resides in the chloroplast thylakoid membrane. Component of the cytochrome b6-f complex, which mediates electron transfer between photosystem II (PSII) and photosystem I (PSI), cyclic electron flow around PSI, and state transitions. In Gossypium barbadense (Sea Island cotton), this protein is Cytochrome b6-f complex subunit 4.